The following is a 304-amino-acid chain: Glutaminase (304 aa).

7 residues coordinate substrate: Ser-63, Asn-114, Glu-158, Asn-165, Tyr-189, Tyr-240, and Val-258.

Belongs to the glutaminase family. As to quaternary structure, homotetramer.

It catalyses the reaction L-glutamine + H2O = L-glutamate + NH4(+). The protein is Glutaminase of Shewanella sp. (strain ANA-3).